The primary structure comprises 784 residues: Ubiquitin carboxyl-terminal hydrolase 1 (784 aa).

Disordered stretches follow at residues 1-21 (MPGVIPSESNGLSRGSPSKKN) and 34-56 (KRALDFTDSQENEEKTSEYRGSE). Positions 7-16 (SESNGLSRGS) are enriched in polar residues. 2 positions are modified to phosphoserine: Ser16 and Ser42. Residues 45–56 (NEEKTSEYRGSE) show a composition bias toward basic and acidic residues. The residue at position 67 (Ser67) is a Phosphoserine. A USP domain is found at 81–784 (VGLNNLGNTC…TPYLLFYKKL (704 aa)). The active-site Nucleophile is Cys90. Basic and acidic residues-rich tracts occupy residues 233–243 (VEEQSLQKEET) and 252–264 (DSMRNTEDVKEQL). 2 disordered regions span residues 233–342 (VEEQ…INWL) and 362–414 (TTNQ…KSGN). Position 474 is a phosphoserine (Ser474). Catalysis depends on His592, which acts as the Proton acceptor. Residues 684 to 725 (NPDKVVGTPFTDNRNSETNDTTNGTHESDRNKESSDQTGVNM) form a disordered region. Residues 693-708 (FTDNRNSETNDTTNGT) are compositionally biased toward polar residues. Over residues 709–718 (HESDRNKESS) the composition is skewed to basic and acidic residues. The residue at position 767 (Ser767) is a Phosphoserine.

Belongs to the peptidase C19 family. Interacts with FANCD2 and PCNA. Interacts with WDR48. Interacts with ATAD5; the interaction regulates USP1-mediated PCNA deubiquitination. Autocatalytic cleavage of USP1 following UV irradiation inactivates it, leading to an increase in ubiquitinated PCNA, recruitment of POLH and translesion synthesis. In terms of processing, ubiquitinated by the CRL2(KLHDC2) complex following autocatalytic cleavage, leading to its degradation: the CRL2(KLHDC2) complex recognizes the diglycine (Gly-Gly) at the C-terminus.

It localises to the nucleus. It catalyses the reaction Thiol-dependent hydrolysis of ester, thioester, amide, peptide and isopeptide bonds formed by the C-terminal Gly of ubiquitin (a 76-residue protein attached to proteins as an intracellular targeting signal).. In terms of biological role, negative regulator of DNA damage repair which specifically deubiquitinates monoubiquitinated FANCD2. Also involved in PCNA-mediated translesion synthesis (TLS) by deubiquitinating monoubiquitinated PCNA. Has almost no deubiquitinating activity by itself and requires the interaction with WDR48 to have a high activity. In Mus musculus (Mouse), this protein is Ubiquitin carboxyl-terminal hydrolase 1.